The chain runs to 474 residues: Bifunctional protein HldE (474 aa).

The interval 1–318 (MKMTLPDFHC…ENAIRGRAET (318 aa)) is ribokinase. 195 to 198 (NLSE) is a binding site for ATP. The active site involves Asp-264. Residues 344–474 (MTNGCFDILH…TNIIKAIKNQ (131 aa)) are cytidylyltransferase.

This sequence in the N-terminal section; belongs to the carbohydrate kinase PfkB family. It in the C-terminal section; belongs to the cytidylyltransferase family. As to quaternary structure, homodimer.

The catalysed reaction is D-glycero-beta-D-manno-heptose 7-phosphate + ATP = D-glycero-beta-D-manno-heptose 1,7-bisphosphate + ADP + H(+). It catalyses the reaction D-glycero-beta-D-manno-heptose 1-phosphate + ATP + H(+) = ADP-D-glycero-beta-D-manno-heptose + diphosphate. It functions in the pathway nucleotide-sugar biosynthesis; ADP-L-glycero-beta-D-manno-heptose biosynthesis; ADP-L-glycero-beta-D-manno-heptose from D-glycero-beta-D-manno-heptose 7-phosphate: step 1/4. Its pathway is nucleotide-sugar biosynthesis; ADP-L-glycero-beta-D-manno-heptose biosynthesis; ADP-L-glycero-beta-D-manno-heptose from D-glycero-beta-D-manno-heptose 7-phosphate: step 3/4. It participates in bacterial outer membrane biogenesis; LPS core biosynthesis. Its function is as follows. Catalyzes the phosphorylation of D-glycero-D-manno-heptose 7-phosphate at the C-1 position to selectively form D-glycero-beta-D-manno-heptose-1,7-bisphosphate. In terms of biological role, catalyzes the ADP transfer from ATP to D-glycero-beta-D-manno-heptose 1-phosphate, yielding ADP-D-glycero-beta-D-manno-heptose. The chain is Bifunctional protein HldE from Photorhabdus laumondii subsp. laumondii (strain DSM 15139 / CIP 105565 / TT01) (Photorhabdus luminescens subsp. laumondii).